We begin with the raw amino-acid sequence, 311 residues long: Biotin synthase (311 aa).

Residues 32 to 258 form the Radical SAM core domain; sequence NGVQFCQLLN…LFPLSRIRLA (227 aa). Residues cysteine 47, cysteine 51, and cysteine 54 each coordinate [4Fe-4S] cluster. [2Fe-2S] cluster-binding residues include cysteine 91, cysteine 124, cysteine 184, and arginine 256.

It belongs to the radical SAM superfamily. Biotin synthase family. Homodimer. It depends on [4Fe-4S] cluster as a cofactor. [2Fe-2S] cluster serves as cofactor.

It carries out the reaction (4R,5S)-dethiobiotin + (sulfur carrier)-SH + 2 reduced [2Fe-2S]-[ferredoxin] + 2 S-adenosyl-L-methionine = (sulfur carrier)-H + biotin + 2 5'-deoxyadenosine + 2 L-methionine + 2 oxidized [2Fe-2S]-[ferredoxin]. It participates in cofactor biosynthesis; biotin biosynthesis; biotin from 7,8-diaminononanoate: step 2/2. Its function is as follows. Catalyzes the conversion of dethiobiotin (DTB) to biotin by the insertion of a sulfur atom into dethiobiotin via a radical-based mechanism. The sequence is that of Biotin synthase from Methylacidiphilum infernorum (isolate V4) (Methylokorus infernorum (strain V4)).